A 216-amino-acid polypeptide reads, in one-letter code: GTP cyclohydrolase-2 (216 aa).

Position 51-55 (51-55 (RIHSE)) interacts with GTP. Positions 56, 67, and 69 each coordinate Zn(2+). Residues glutamine 72, 94–96 (EGR), and threonine 116 each bind GTP. Aspartate 128 functions as the Proton acceptor in the catalytic mechanism. The active-site Nucleophile is arginine 130. Residues threonine 151 and lysine 156 each contribute to the GTP site.

It belongs to the GTP cyclohydrolase II family. Zn(2+) serves as cofactor.

It catalyses the reaction GTP + 4 H2O = 2,5-diamino-6-hydroxy-4-(5-phosphoribosylamino)-pyrimidine + formate + 2 phosphate + 3 H(+). Its pathway is cofactor biosynthesis; riboflavin biosynthesis; 5-amino-6-(D-ribitylamino)uracil from GTP: step 1/4. Functionally, catalyzes the conversion of GTP to 2,5-diamino-6-ribosylamino-4(3H)-pyrimidinone 5'-phosphate (DARP), formate and pyrophosphate. This chain is GTP cyclohydrolase-2, found in Haemophilus influenzae (strain PittEE).